We begin with the raw amino-acid sequence, 32 residues long: MSDIN-like toxin proprotein 1 (32 aa).

Residues 1–10 (MSDINVTRLP) constitute a propeptide that is removed on maturation. The cyclopeptide (Gly-Pro) cross-link spans 11–18 (GFVPILFP). The propeptide occupies 19–32 (CVGDDVNTALTRGE).

Belongs to the MSDIN fungal toxin family. Processed by the macrocyclase-peptidase enzyme POPB to yield a toxic cyclic octapeptide. POPB first removes 10 residues from the N-terminus. Conformational trapping of the remaining peptide forces the enzyme to release this intermediate rather than proceed to macrocyclization. The enzyme rebinds the remaining peptide in a different conformation and catalyzes macrocyclization of the N-terminal 8 residues.

Functionally, probable toxin that belongs to the MSDIN-like toxin family responsible for a large number of food poisoning cases and deaths. The polypeptide is MSDIN-like toxin proprotein 1 (Amanita bisporigera (Destroying angel)).